A 151-amino-acid chain; its full sequence is UPF0178 protein RD1_0321 (151 aa).

Belongs to the UPF0178 family.

The chain is UPF0178 protein RD1_0321 from Roseobacter denitrificans (strain ATCC 33942 / OCh 114) (Erythrobacter sp. (strain OCh 114)).